We begin with the raw amino-acid sequence, 580 residues long: Pentatricopeptide repeat-containing protein At5g10690 (580 aa).

9 PPR repeats span residues 76–110 (NTIV…GGIG), 112–142 (DSIS…IEYG), 151–181 (SSSL…YDIL), 189–223 (SVLI…RLEP), 224–254 (DRLT…MKEK), 266–296 (DVVT…MKLC), 302–337 (DRTA…GANE), 342–376 (KPHL…SSGS), and 382–417 (QQEA…KTIP). The CBS domain maps to 486–553 (VPIVDDRGSC…IVVHCGNFSG (68 aa)).

Belongs to the PPR family. P subfamily.

This Arabidopsis thaliana (Mouse-ear cress) protein is Pentatricopeptide repeat-containing protein At5g10690 (CBSPPR1).